Consider the following 88-residue polypeptide: MQAEIHPDYRQVVFIDASTGKKFLSASTVTSNDTTDFEGKEYPAIRMDITSDSHPFYTGKQKFTQADGAVDKFNKKFAGFGFKNNEDK.

This sequence belongs to the bacterial ribosomal protein bL31 family. Type B subfamily. Part of the 50S ribosomal subunit.

The sequence is that of Large ribosomal subunit protein bL31B from Leuconostoc mesenteroides subsp. mesenteroides (strain ATCC 8293 / DSM 20343 / BCRC 11652 / CCM 1803 / JCM 6124 / NCDO 523 / NBRC 100496 / NCIMB 8023 / NCTC 12954 / NRRL B-1118 / 37Y).